The following is a 258-amino-acid chain: tRNA pseudouridine synthase A (258 aa).

The active-site Nucleophile is the aspartate 61. Position 119 (tyrosine 119) interacts with substrate.

It belongs to the tRNA pseudouridine synthase TruA family. As to quaternary structure, homodimer.

The enzyme catalyses uridine(38/39/40) in tRNA = pseudouridine(38/39/40) in tRNA. Formation of pseudouridine at positions 38, 39 and 40 in the anticodon stem and loop of transfer RNAs. This Chlorobium phaeobacteroides (strain DSM 266 / SMG 266 / 2430) protein is tRNA pseudouridine synthase A.